We begin with the raw amino-acid sequence, 94 residues long: Beta-defensin 132 (94 aa).

The signal sequence occupies residues 1–22 (MKFLLLVLAALGFLTQVIPASA). Disulfide bonds link C27–C55 and C39–C56. Residues 72–94 (GNHWQSRRNTQRKDKKQQTTVTS) are disordered. A compositionally biased stretch (basic residues) spans 76–86 (QSRRNTQRKDK).

Belongs to the beta-defensin family.

The protein resides in the secreted. Has antibacterial activity. The polypeptide is Beta-defensin 132 (DEFB132) (Gorilla gorilla gorilla (Western lowland gorilla)).